A 381-amino-acid polypeptide reads, in one-letter code: uncharacterized protein (381 aa).

11 helical membrane passes run Ile-10–Tyr-29, Ile-75–Leu-93, Leu-98–Arg-117, Tyr-130–Val-147, Thr-157–Tyr-179, Ile-199–Glu-221, Leu-236–Ile-255, Tyr-262–Thr-284, Asn-289–Leu-311, Ala-323–Leu-340, and Leu-355–Ile-374.

The protein localises to the cell membrane. This is an uncharacterized protein from Rickettsia prowazekii (strain Madrid E).